The sequence spans 257 residues: UPF0246 protein Spro_0686 (257 aa).

Belongs to the UPF0246 family.

This Serratia proteamaculans (strain 568) protein is UPF0246 protein Spro_0686.